Reading from the N-terminus, the 20-residue chain is Pommaclein (20 aa).

The protein belongs to the GASA family. In terms of tissue distribution, expressed in pulp (aril) of fruits (at protein level).

The polypeptide is Pommaclein (Punica granatum (Pomegranate)).